The primary structure comprises 191 residues: uncharacterized protein (191 aa).

Residues 5–65 (GDSREKILHT…IEAVTYTGKI (61 aa)) enclose the HTH tetR-type domain. The H-T-H motif DNA-binding region spans 28-47 (GLNQIVKESGAPKGSLYHFF).

This is an uncharacterized protein from Bacillus subtilis (strain 168).